The following is a 245-amino-acid chain: Ribosomal RNA small subunit methyltransferase G (245 aa).

S-adenosyl-L-methionine is bound by residues Gly-90, Leu-95, 140–141 (AE), and Arg-158. Residues 223-245 (VVSARRAKPPHPKSARTGKAGTR) form a disordered region. Residues 227-245 (RRAKPPHPKSARTGKAGTR) show a composition bias toward basic residues.

This sequence belongs to the methyltransferase superfamily. RNA methyltransferase RsmG family.

The protein localises to the cytoplasm. In terms of biological role, specifically methylates the N7 position of guanine in position 518 of 16S rRNA. This Mycobacterium avium (strain 104) protein is Ribosomal RNA small subunit methyltransferase G.